Reading from the N-terminus, the 680-residue chain is DNA-directed RNA polymerase subunit beta' (680 aa).

Residues cysteine 69, cysteine 71, cysteine 87, and cysteine 90 each contribute to the Zn(2+) site. Positions 489, 491, and 493 each coordinate Mg(2+).

It belongs to the RNA polymerase beta' chain family. RpoC1 subfamily. In plastids the minimal PEP RNA polymerase catalytic core is composed of four subunits: alpha, beta, beta', and beta''. When a (nuclear-encoded) sigma factor is associated with the core the holoenzyme is formed, which can initiate transcription. It depends on Mg(2+) as a cofactor. Requires Zn(2+) as cofactor.

The protein localises to the plastid. The protein resides in the chloroplast. The enzyme catalyses RNA(n) + a ribonucleoside 5'-triphosphate = RNA(n+1) + diphosphate. DNA-dependent RNA polymerase catalyzes the transcription of DNA into RNA using the four ribonucleoside triphosphates as substrates. The chain is DNA-directed RNA polymerase subunit beta' from Capsella bursa-pastoris (Shepherd's purse).